A 287-amino-acid chain; its full sequence is Kit ligand (287 aa).

The first 25 residues, 1–25 (MKKAQTWIITCFCLQLLLLNPLVKT), serve as a signal peptide directing secretion. Residues 26–225 (QSSCGNPVTD…LGFISSSSLQ (200 aa)) are Extracellular-facing. 2 disulfides stabilise this stretch: Cys29–Cys117 and Cys68–Cys167. N-linked (GlcNAc...) asparagine glycans are attached at residues Asn100, Asn106, Asn149, Asn178, Asn200, and Asn206. The helical transmembrane segment at 226-246 (GISIALTSLLSLLIGFILGVI) threads the bilayer. At 247-287 (YWKKTHPKSRPESNETTQCHGCQEENEISMLQQKEKEHLQV) the chain is on the cytoplasmic side.

The protein belongs to the SCF family. In terms of assembly, homodimer, non-covalently linked. A soluble form is produced by proteolytic processing of isoform 1 in the extracellular domain.

It localises to the cell membrane. Its subcellular location is the secreted. The protein localises to the cytoplasm. The protein resides in the cytoskeleton. It is found in the cell projection. It localises to the lamellipodium. Its subcellular location is the filopodium. Functionally, ligand for the receptor-type protein-tyrosine kinase KIT. Plays an essential role in the regulation of cell survival and proliferation, hematopoiesis, stem cell maintenance, gametogenesis, mast cell development, migration and function, and in melanogenesis. KITLG/SCF binding can activate several signaling pathways. Acts synergistically with other cytokines, probably interleukins. The polypeptide is Kit ligand (KITLG) (Coturnix japonica (Japanese quail)).